A 307-amino-acid polypeptide reads, in one-letter code: Cytochrome c1 2, heme protein, mitochondrial (307 aa).

Residues 1–64 constitute a mitochondrion transit peptide; the sequence is MVGGGVIRQL…LLSFSTVASA (64 aa). At 65–270 the chain is on the mitochondrial intermembrane side; the sequence is DEAEHGLECP…EPEMEERKLM (206 aa). The region spanning 90–197 is the Cytochrome c domain; sequence ASIRRGHQVY…NGQNYVFALL (108 aa). Residues Cys103, Cys106, His107, and Met226 each contribute to the heme c site. The helical transmembrane segment at 271–288 threads the bilayer; sequence GFKWIFLLSLALLQAAYY. The Mitochondrial matrix portion of the chain corresponds to 289 to 307; that stretch reads RRLKWSVLKSRKLVLDVVN.

Belongs to the cytochrome c family. In terms of assembly, component of the ubiquinol-cytochrome c oxidoreductase (cytochrome b-c1 complex, complex III, CIII), a multisubunit enzyme composed of 10 subunits. The complex is composed of 3 respiratory subunits cytochrome b (MT-CYB), cytochrome c1 (CYC1-1 or CYC1-2) and Rieske protein (UCR1-1 or UCR1-2), 2 core protein subunits MPPalpha1 (or MPPalpha2) and MPPB, and 5 low-molecular weight protein subunits QCR7-1 (or QCR7-2), UCRQ-1 (or UCRQ-2), QCR9, UCRY and probably QCR6-1 (or QCR6-2). The complex exists as an obligatory dimer and forms supercomplexes (SCs) in the inner mitochondrial membrane with NADH-ubiquinone oxidoreductase (complex I, CI), resulting in different assemblies (supercomplexes SCI(1)III(2) and SCI(2)III(4)). In terms of processing, binds 1 heme c group covalently per subunit.

It localises to the mitochondrion inner membrane. In terms of biological role, component of the ubiquinol-cytochrome c oxidoreductase, a multisubunit transmembrane complex that is part of the mitochondrial electron transport chain which drives oxidative phosphorylation. The respiratory chain contains 3 multisubunit complexes succinate dehydrogenase (complex II, CII), ubiquinol-cytochrome c oxidoreductase (cytochrome b-c1 complex, complex III, CIII) and cytochrome c oxidase (complex IV, CIV), that cooperate to transfer electrons derived from NADH and succinate to molecular oxygen, creating an electrochemical gradient over the inner membrane that drives transmembrane transport and the ATP synthase. The cytochrome b-c1 complex catalyzes electron transfer from ubiquinol to cytochrome c, linking this redox reaction to translocation of protons across the mitochondrial inner membrane, with protons being carried across the membrane as hydrogens on the quinol. In the process called Q cycle, 2 protons are consumed from the matrix, 4 protons are released into the intermembrane space and 2 electrons are passed to cytochrome c. Cytochrome c1 is a catalytic core subunit containing a c-type heme. It transfers electrons from the [2Fe-2S] iron-sulfur cluster of the Rieske protein to cytochrome c. This Arabidopsis thaliana (Mouse-ear cress) protein is Cytochrome c1 2, heme protein, mitochondrial (CYC1-2).